An 894-amino-acid chain; its full sequence is MARQKKMGQNVLRAVFFLVLGLLGHSHGGFPNTISIGGLFMRNTVQEHSAFRFAVQLYNTNQNTTEKPFHLNYHVDHLDSSNSFSVTNAFCSQFSRGVYAIFGFYDQMSMNTLTSFCGALHTSFVTPSFPTDADVQFVIQMRPALKGAILSLLGHYKWEKFVYLYDTERGFSILQAIMEAAVQNNWQVTARSVGNIKDVQEFRRIIEEMDRRQEKRYLIDCEVERINTILEQVVILGKHSRGYHYMLANLGFTDILLERVMHGGANITGFQIVNNENPMVQQFIQRWVRLDEREFPEAKNAPLKYTSALTHDAILVIAEAFRYLRRQRVDVSRRGSAGDCLANPAVPWSQGIDIERALKMVQVQGMTGNIQFDTYGRRTNYTIDVYEMKVSGSRKAGYWNEYERFVPFSDQQISNDSASSENRTIVVTTILESPYVMYKKNHEQLEGNERYEGYCVDLAYEIAKHVRIKYKLSIVGDGKYGARDPETKIWNGMVGELVYGRADIAVAPLTITLVREEVIDFSKPFMSLGISIMIKKPQKSKPGVFSFLDPLAYEIWMCIVFASIGVSVVLFLVSRFSPYEWHLEDNNEEPRDPQSPPDPPNEFGIFNSLWFSLGAFMQQGCDISPRSLSGRIVGGVWWFFTLIIISSYTANLAAFLTVERMVSPIESAEDLAKQTEIAYGTLDSGSTKEFFRRSKIAVYEKMWSYMKSAEPSVFTKTTADGVARVRKSKGKFAFLLESTMNEYIEQRKPCDTMKVGGNLDSKGYGVATPKGSALGNAVNLAVLKLNEQGLLDKLKNKWWYDKGECGTGGCGSKDKTSALSLSNVAGVFYILVGGLGLAMMVALIEFCYKSRAESKRMKLTKNTQNFKPAPATNTQNYATYREGYNVYGTESVKI.

An N-terminal signal peptide occupies residues 1-28 (MARQKKMGQNVLRAVFFLVLGLLGHSHG). Residues 29 to 552 (GFPNTISIGG…GVFSFLDPLA (524 aa)) lie on the Extracellular side of the membrane. N-linked (GlcNAc...) asparagine glycans are attached at residues N63, N266, N380, N415, and N422. A disulfide bridge links C91 with C340. 3 residues coordinate L-glutamate: P508, T510, and R515. Residues 553–573 (YEIWMCIVFASIGVSVVLFLV) form a helical membrane-spanning segment. Over 574–602 (SRFSPYEWHLEDNNEEPRDPQSPPDPPNE) the chain is Cytoplasmic. An intramembrane region (helical; Pore-forming) is located at residues 603-618 (FGIFNSLWFSLGAFMQ). An intramembrane segment occupies 619–621 (QGC). A lipid anchor (S-palmitoyl cysteine) is attached at C621. Over 622–627 (DISPRS) the chain is Cytoplasmic. The helical transmembrane segment at 628–648 (LSGRIVGGVWWFFTLIIISSY) threads the bilayer. The Extracellular portion of the chain corresponds to 649-823 (TANLAAFLTV…DKTSALSLSN (175 aa)). L-glutamate is bound by residues S686, T687, and E737. An intrachain disulfide couples C750 to C805. The helical transmembrane segment at 824–844 (VAGVFYILVGGLGLAMMVALI) threads the bilayer. The Cytoplasmic segment spans residues 845–894 (EFCYKSRAESKRMKLTKNTQNFKPAPATNTQNYATYREGYNVYGTESVKI). C847 carries the S-palmitoyl cysteine lipid modification. Phosphotyrosine is present on residues Y877 and Y887.

This sequence belongs to the glutamate-gated ion channel (TC 1.A.10.1) family. GRIA3 subfamily. In terms of assembly, homotetramer or heterotetramer of pore-forming glutamate receptor subunits. Tetramers may be formed by the dimerization of dimers. Interacts with PICK1, GRIP1 and GRIP2. Found in a complex with GRIA1, GRIA2, GRIA4, CNIH2, CNIH3, CACNG2, CACNG3, CACNG4, CACNG5, CACNG7 and CACNG8. Interacts with CACNG5. Found in a complex with GRIA1, GRIA2, GRIA4, DLG4, CACNG8 and CNIH2.

The protein localises to the cell membrane. It is found in the postsynaptic cell membrane. Its subcellular location is the postsynaptic density membrane. It carries out the reaction Ca(2+)(in) = Ca(2+)(out). Ionotropic glutamate receptor that functions as a ligand-gated cation channel, gated by L-glutamate and glutamatergic agonists such as alpha-amino-3-hydroxy-5-methyl-4-isoxazolepropionic acid (AMPA), quisqualic acid, and kainic acid. L-glutamate acts as an excitatory neurotransmitter at many synapses in the central nervous system and plays an important role in fast excitatory synaptic transmission by inducing long-term potentiation. Binding of the excitatory neurotransmitter L-glutamate induces a conformation change, leading to the opening of the cation channel, and thereby converts the chemical signal to an electrical impulse upon entry of calcium. The receptor then desensitizes rapidly and enters a transient inactive state, characterized by the presence of bound agonist. In the presence of CACNG8, shows resensitization which is characterized by a delayed accumulation of current flux upon continued application of glutamate. This is Glutamate receptor 3 from Macaca fascicularis (Crab-eating macaque).